A 426-amino-acid chain; its full sequence is 3-phosphoshikimate 1-carboxyvinyltransferase (426 aa).

3 residues coordinate 3-phosphoshikimate: lysine 22, serine 23, and arginine 27. Lysine 22 is a phosphoenolpyruvate binding site. Residues glycine 96 and arginine 124 each contribute to the phosphoenolpyruvate site. Serine 170, serine 171, glutamine 172, serine 198, aspartate 314, asparagine 337, and lysine 341 together coordinate 3-phosphoshikimate. Phosphoenolpyruvate is bound at residue glutamine 172. Aspartate 314 acts as the Proton acceptor in catalysis. 3 residues coordinate phosphoenolpyruvate: arginine 345, arginine 387, and lysine 412.

The protein belongs to the EPSP synthase family. As to quaternary structure, monomer.

Its subcellular location is the cytoplasm. It catalyses the reaction 3-phosphoshikimate + phosphoenolpyruvate = 5-O-(1-carboxyvinyl)-3-phosphoshikimate + phosphate. The protein operates within metabolic intermediate biosynthesis; chorismate biosynthesis; chorismate from D-erythrose 4-phosphate and phosphoenolpyruvate: step 6/7. In terms of biological role, catalyzes the transfer of the enolpyruvyl moiety of phosphoenolpyruvate (PEP) to the 5-hydroxyl of shikimate-3-phosphate (S3P) to produce enolpyruvyl shikimate-3-phosphate and inorganic phosphate. This is 3-phosphoshikimate 1-carboxyvinyltransferase from Shewanella piezotolerans (strain WP3 / JCM 13877).